The following is a 246-amino-acid chain: 3-deoxy-manno-octulosonate cytidylyltransferase (246 aa).

It belongs to the KdsB family.

The protein localises to the cytoplasm. It carries out the reaction 3-deoxy-alpha-D-manno-oct-2-ulosonate + CTP = CMP-3-deoxy-beta-D-manno-octulosonate + diphosphate. Its pathway is nucleotide-sugar biosynthesis; CMP-3-deoxy-D-manno-octulosonate biosynthesis; CMP-3-deoxy-D-manno-octulosonate from 3-deoxy-D-manno-octulosonate and CTP: step 1/1. It functions in the pathway bacterial outer membrane biogenesis; lipopolysaccharide biosynthesis. Activates KDO (a required 8-carbon sugar) for incorporation into bacterial lipopolysaccharide in Gram-negative bacteria. The chain is 3-deoxy-manno-octulosonate cytidylyltransferase from Rickettsia africae (strain ESF-5).